Reading from the N-terminus, the 417-residue chain is Serine hydroxymethyltransferase (417 aa).

(6S)-5,6,7,8-tetrahydrofolate-binding positions include Leu121 and 125–127 (GHL). Lys229 carries the post-translational modification N6-(pyridoxal phosphate)lysine. (6S)-5,6,7,8-tetrahydrofolate is bound at residue 355 to 357 (SPF).

It belongs to the SHMT family. As to quaternary structure, homodimer. The cofactor is pyridoxal 5'-phosphate.

It is found in the cytoplasm. The catalysed reaction is (6R)-5,10-methylene-5,6,7,8-tetrahydrofolate + glycine + H2O = (6S)-5,6,7,8-tetrahydrofolate + L-serine. Its pathway is one-carbon metabolism; tetrahydrofolate interconversion. The protein operates within amino-acid biosynthesis; glycine biosynthesis; glycine from L-serine: step 1/1. Its function is as follows. Catalyzes the reversible interconversion of serine and glycine with tetrahydrofolate (THF) serving as the one-carbon carrier. This reaction serves as the major source of one-carbon groups required for the biosynthesis of purines, thymidylate, methionine, and other important biomolecules. Also exhibits THF-independent aldolase activity toward beta-hydroxyamino acids, producing glycine and aldehydes, via a retro-aldol mechanism. The polypeptide is Serine hydroxymethyltransferase (Photorhabdus laumondii subsp. laumondii (strain DSM 15139 / CIP 105565 / TT01) (Photorhabdus luminescens subsp. laumondii)).